A 284-amino-acid chain; its full sequence is P2R1A-PPP2R2A-interacting phosphatase regulator 1 (284 aa).

The segment at 1-65 (MAQEKMELDL…RRNSTTFPSR (65 aa)) is disordered. Over residues 20 to 29 (EGGGPGGGGL) the composition is skewed to gly residues. At Ser-32 the chain carries Phosphoserine. Ser-34 is modified (phosphoserine; by CHEK1). Phosphoserine is present on residues Ser-42, Ser-45, Ser-59, and Ser-73. Lys-86 participates in a covalent cross-link: Glycyl lysine isopeptide (Lys-Gly) (interchain with G-Cter in SUMO1). Residues Ser-140 and Ser-144 each carry the phosphoserine modification. Thr-146 is subject to Phosphothreonine. Residues 164–185 (SNGLPPSPIPSPTTRFTTRRSQ) are disordered. Residues 175–185 (PTTRFTTRRSQ) show a composition bias toward low complexity. Phosphoserine is present on residues Ser-184 and Ser-186. A disordered region spans residues 233–284 (GVCVSSDTLDGNSSSAGSSCNSPAKVSTTTDSPVSPAQAASPFIPVDELSSK). Residues 243–254 (GNSSSAGSSCNS) show a composition bias toward low complexity. Residues 256-267 (AKVSTTTDSPVS) are compositionally biased toward polar residues. Residues Ser-264, Ser-267, and Ser-273 each carry the phosphoserine modification.

Belongs to the FAM122 family. As to quaternary structure, interacts with PPP2CA and PPP2R1A. Interacts (via its N-terminus) with PPP2R2A; the interaction is direct and this interaction inhibits PP2A activity. The CHEK1-mediated Ser-34 phosphorylated form interacts with 14-3-3 proteins. Post-translationally, CHEK1-mediated phosphorylation at Ser-34 negatively regulates its ability to inhibit serine/threonine-protein phosphatase 2A (PP2A) activity. Phosphorylation leads to its release from the PP2A complex and its sequestration by 14-3-3 proteins in the cytoplasm resulting in its inability to translocate to the nucleus, where it otherwise inhibits PP2A.

It localises to the nucleus. The protein localises to the cytoplasm. Functionally, acts as an inhibitor of serine/threonine-protein phosphatase 2A (PP2A) activity. Inhibits PP2A activity by blocking the substrate binding site on PPP2R2A and the active site of PPP2CA. Potentiates ubiquitin-mediated proteasomal degradation of serine/threonine-protein phosphatase 2A catalytic subunit alpha (PPP2CA). Inhibits PP2A-mediated dephosphorylation of WEE1, promoting ubiquitin-mediated proteolysis of WEE1, thereby releasing G2/M checkpoint. The polypeptide is P2R1A-PPP2R2A-interacting phosphatase regulator 1 (Mus musculus (Mouse)).